The following is a 679-amino-acid chain: Glycine--tRNA ligase beta subunit (679 aa).

This sequence belongs to the class-II aminoacyl-tRNA synthetase family. In terms of assembly, tetramer of two alpha and two beta subunits.

The protein resides in the cytoplasm. The catalysed reaction is tRNA(Gly) + glycine + ATP = glycyl-tRNA(Gly) + AMP + diphosphate. The sequence is that of Glycine--tRNA ligase beta subunit from Streptococcus pyogenes serotype M6 (strain ATCC BAA-946 / MGAS10394).